We begin with the raw amino-acid sequence, 510 residues long: Inner membrane protein YeeR (510 aa).

A topological domain (cytoplasmic) is located at residue Met-1. A helical membrane pass occupies residues 2–22 (LQIVGALILLIAGFAILRLLF). At 23–30 (RALISTAS) the chain is on the periplasmic side. Residues 31 to 51 (ALAGLILLCLFGPALLAGYIT) form a helical membrane-spanning segment. At 52–61 (ERITRLFHIR) the chain is on the cytoplasmic side. Residues 62–82 (WLAGVFLTIAGMIISFMWGLD) traverse the membrane as a helical segment. At 83–94 (GKHIALEAHTFD) the chain is on the periplasmic side. The helical transmembrane segment at 95–115 (SVKFILTTALAGGLLAVPLQI) threads the bilayer. Residues 116-136 (KNIQQNGITPEDISKEINGYY) lie on the Cytoplasmic side of the membrane. A helical transmembrane segment spans residues 137–157 (CCFYTAFFLMACSACAPLIAL). Topologically, residues 158-164 (QYDISPS) are periplasmic. The chain crosses the membrane as a helical span at residues 165–185 (LMWWGGLLYWLAALVTLLWAA). Residues 186–510 (SQIQALKKLT…KIREGKVEER (325 aa)) lie on the Cytoplasmic side of the membrane.

The protein localises to the cell inner membrane. The protein is Inner membrane protein YeeR (yeeR) of Escherichia coli (strain K12).